Consider the following 153-residue polypeptide: Ribosome maturation factor RimP (153 aa).

This sequence belongs to the RimP family.

Its subcellular location is the cytoplasm. Functionally, required for maturation of 30S ribosomal subunits. The polypeptide is Ribosome maturation factor RimP (Clostridium botulinum (strain Kyoto / Type A2)).